Consider the following 173-residue polypeptide: Small ribosomal subunit protein mS25 (173 aa).

It belongs to the mitochondrion-specific ribosomal protein mS25 family. Component of the mitochondrial ribosome small subunit (28S) which comprises a 12S rRNA and about 30 distinct proteins.

The protein resides in the mitochondrion. The chain is Small ribosomal subunit protein mS25 (MRPS25) from Bos taurus (Bovine).